A 227-amino-acid chain; its full sequence is Cytochrome c oxidase subunit 2 (227 aa).

The Mitochondrial intermembrane segment spans residues 1–14 (MAHAAQVGLQDATS). The helical transmembrane segment at 15-45 (PIMEELIIFHDHALMIIFLICFLVLYALFLT) threads the bilayer. The Mitochondrial matrix portion of the chain corresponds to 46-59 (LTTKLTNTSISDAQ). A helical transmembrane segment spans residues 60 to 87 (EMETVWTILPAIILVLIALPSLRILYMT). The Mitochondrial intermembrane portion of the chain corresponds to 88-227 (DEVNDPSFTI…IFEMGPVFTL (140 aa)). Residues histidine 161, cysteine 196, glutamate 198, cysteine 200, histidine 204, and methionine 207 each contribute to the Cu cation site. Glutamate 198 is a Mg(2+) binding site.

Belongs to the cytochrome c oxidase subunit 2 family. Component of the cytochrome c oxidase (complex IV, CIV), a multisubunit enzyme composed of 14 subunits. The complex is composed of a catalytic core of 3 subunits MT-CO1, MT-CO2 and MT-CO3, encoded in the mitochondrial DNA, and 11 supernumerary subunits COX4I, COX5A, COX5B, COX6A, COX6B, COX6C, COX7A, COX7B, COX7C, COX8 and NDUFA4, which are encoded in the nuclear genome. The complex exists as a monomer or a dimer and forms supercomplexes (SCs) in the inner mitochondrial membrane with NADH-ubiquinone oxidoreductase (complex I, CI) and ubiquinol-cytochrome c oxidoreductase (cytochrome b-c1 complex, complex III, CIII), resulting in different assemblies (supercomplex SCI(1)III(2)IV(1) and megacomplex MCI(2)III(2)IV(2)). Found in a complex with TMEM177, COA6, COX18, COX20, SCO1 and SCO2. Interacts with TMEM177 in a COX20-dependent manner. Interacts with COX20. Interacts with COX16. It depends on Cu cation as a cofactor.

It is found in the mitochondrion inner membrane. The catalysed reaction is 4 Fe(II)-[cytochrome c] + O2 + 8 H(+)(in) = 4 Fe(III)-[cytochrome c] + 2 H2O + 4 H(+)(out). Functionally, component of the cytochrome c oxidase, the last enzyme in the mitochondrial electron transport chain which drives oxidative phosphorylation. The respiratory chain contains 3 multisubunit complexes succinate dehydrogenase (complex II, CII), ubiquinol-cytochrome c oxidoreductase (cytochrome b-c1 complex, complex III, CIII) and cytochrome c oxidase (complex IV, CIV), that cooperate to transfer electrons derived from NADH and succinate to molecular oxygen, creating an electrochemical gradient over the inner membrane that drives transmembrane transport and the ATP synthase. Cytochrome c oxidase is the component of the respiratory chain that catalyzes the reduction of oxygen to water. Electrons originating from reduced cytochrome c in the intermembrane space (IMS) are transferred via the dinuclear copper A center (CU(A)) of subunit 2 and heme A of subunit 1 to the active site in subunit 1, a binuclear center (BNC) formed by heme A3 and copper B (CU(B)). The BNC reduces molecular oxygen to 2 water molecules using 4 electrons from cytochrome c in the IMS and 4 protons from the mitochondrial matrix. In Pan troglodytes (Chimpanzee), this protein is Cytochrome c oxidase subunit 2 (MT-CO2).